A 356-amino-acid polypeptide reads, in one-letter code: Heparan sulfate 2-O-sulfotransferase 1 (356 aa).

Over 1–11 (MGLLRIMMPPK) the chain is Cytoplasmic. Residues 12-28 (LQLLAVVAFAVAMLFLE) traverse the membrane as a helical; Signal-anchor for type II membrane protein segment. Positions 24–51 (MLFLENQIQKLEESRAKLERAIARHEVR) form a coiled coil. Over 29–356 (NQIQKLEESR…FYEKIYPKSN (328 aa)) the chain is Lumenal. Residues Lys83, Thr84, Ala85, Ser86, Thr87, and Ser88 each coordinate adenosine 3',5'-bisphosphate. Residues Asn108 and Asn127 are each glycosylated (N-linked (GlcNAc...) asparagine). Residues His140 and His142 contribute to the active site. The adenosine 3',5'-bisphosphate site is built by Arg164 and Ser172. 2 cysteine pairs are disulfide-bonded: Cys201/Cys209 and Cys222/Cys228. 4 residues coordinate adenosine 3',5'-bisphosphate: Tyr279, Ser285, Thr290, and Lys293.

The protein belongs to the sulfotransferase 3 family. In terms of assembly, homotrimer. Interacts with the C5-epimerase GLCE. In terms of processing, N-glycosylated. As to expression, widely expressed. Expressed at higher level in lung and brain. Weakly expressed in spleen.

It localises to the golgi apparatus membrane. Its function is as follows. Catalyzes the transfer of a sulfo group from 3'-phospho-5'-adenylyl sulfate (PAPS) to the 2-OH position of iduronic acid (IdoA) or glucuronic acid (GlcA) within the heparan sulfate (HS) chain and participates in HS biosynthesis. Required for metanephric development of kidney formation, suggesting that 2-O-sulfation within HS is essential for signaling between ureteric bud and metanephric mesenchyme. This Mus musculus (Mouse) protein is Heparan sulfate 2-O-sulfotransferase 1.